Here is a 123-residue protein sequence, read N- to C-terminus: Small ribosomal subunit protein uS12 (123 aa).

Residues 1–45 are disordered; sequence MPTINQLIRKKRQSGATRKKSPALQKSPQKRGVCLQVKTKTPKKP. Positions 8 to 21 are enriched in basic residues; that stretch reads IRKKRQSGATRKKS.

It belongs to the universal ribosomal protein uS12 family. As to quaternary structure, part of the 30S ribosomal subunit. Contacts proteins S8 and S17. May interact with IF1 in the 30S initiation complex.

With S4 and S5 plays an important role in translational accuracy. Its function is as follows. Interacts with and stabilizes bases of the 16S rRNA that are involved in tRNA selection in the A site and with the mRNA backbone. Located at the interface of the 30S and 50S subunits, it traverses the body of the 30S subunit contacting proteins on the other side and probably holding the rRNA structure together. The combined cluster of proteins S8, S12 and S17 appears to hold together the shoulder and platform of the 30S subunit. In Chlamydia muridarum (strain MoPn / Nigg), this protein is Small ribosomal subunit protein uS12.